Here is a 323-residue protein sequence, read N- to C-terminus: Methionyl-tRNA formyltransferase (323 aa).

115-118 (SLLP) contributes to the (6S)-5,6,7,8-tetrahydrofolate binding site.

Belongs to the Fmt family.

It carries out the reaction L-methionyl-tRNA(fMet) + (6R)-10-formyltetrahydrofolate = N-formyl-L-methionyl-tRNA(fMet) + (6S)-5,6,7,8-tetrahydrofolate + H(+). Its function is as follows. Attaches a formyl group to the free amino group of methionyl-tRNA(fMet). The formyl group appears to play a dual role in the initiator identity of N-formylmethionyl-tRNA by promoting its recognition by IF2 and preventing the misappropriation of this tRNA by the elongation apparatus. The polypeptide is Methionyl-tRNA formyltransferase (Blochmanniella floridana).